Reading from the N-terminus, the 337-residue chain is uncharacterized protein (337 aa).

The segment covering 1–11 (MSEIEEEEEEG) has biased composition (acidic residues). The disordered stretch occupies residues 1–20 (MSEIEEEEEEGSASAITGSR). S2 bears the N-acetylserine mark. A coiled-coil region spans residues 50–130 (ALSTRVSALE…LQRDVSKLEG (81 aa)). The tract at residues 139–242 (LQDDDQNAGT…PISPRRHSVS (104 aa)) is disordered. Residues 170–182 (SSIQSQQASEAIE) are compositionally biased toward low complexity. Residues 197–211 (LSASLPLVSQTTTPR) show a composition bias toward polar residues. The residue at position 213 (T213) is a Phosphothreonine. A Phosphoserine modification is found at S217. Over residues 223–233 (ASGTPKTTSRP) the composition is skewed to polar residues. At T226 the chain carries Phosphothreonine. S235 is subject to Phosphoserine.

This is an uncharacterized protein from Arabidopsis thaliana (Mouse-ear cress).